The chain runs to 158 residues: Small ribosomal subunit protein uS9 (158 aa).

It belongs to the universal ribosomal protein uS9 family.

The chain is Small ribosomal subunit protein uS9 from Brucella melitensis biotype 1 (strain ATCC 23456 / CCUG 17765 / NCTC 10094 / 16M).